Here is a 634-residue protein sequence, read N- to C-terminus: Sodium-dependent multivitamin transporter (634 aa).

12 helical membrane passes run 23–43 (FSVV…VIGL), 65–85 (MGCL…VAIL), 100–120 (FLGC…IPVF), 142–162 (ICGT…ALYA), 175–195 (LWLS…LGGL), 207–227 (LVMF…VGGL), 255–275 (FWTL…VNQA), 295–315 (AVFP…LVMF), 350–370 (LPGL…SSAF), 403–423 (FAYG…GSVL), 427–447 (LSIF…GLFF), and 455–475 (AIVG…GSIV). Residues asparagine 488 and asparagine 497 are each glycosylated (N-linked (GlcNAc...) asparagine). The chain crosses the membrane as a helical span at residues 526–546 (LWYSAHNSTTVIVVGLIVSLL).

This sequence belongs to the sodium:solute symporter (SSF) (TC 2.A.21) family. As to quaternary structure, interacts with PDZD11. In terms of tissue distribution, expressed in the intestinal mucosa, liver and kidney (at protein level). Expressed in the colon.

The protein localises to the cell membrane. The protein resides in the apical cell membrane. It catalyses the reaction biotin(out) + 2 Na(+)(out) = biotin(in) + 2 Na(+)(in). The enzyme catalyses (R)-pantothenate(out) + 2 Na(+)(out) = (R)-pantothenate(in) + 2 Na(+)(in). The catalysed reaction is (R)-lipoate(out) + 2 Na(+)(out) = (R)-lipoate(in) + 2 Na(+)(in). It carries out the reaction iodide(out) + 2 Na(+)(out) = iodide(in) + 2 Na(+)(in). Its function is as follows. Sodium-dependent multivitamin transporter that mediates the electrogenic transport of pantothenate, biotin, lipoate and iodide. Functions as a Na(+)-coupled substrate symporter where the stoichiometry of Na(+):substrate is 2:1, creating an electrochemical Na(+) gradient used as driving force for substrate uptake. Required for biotin and pantothenate uptake in the intestine across the brush border membrane. Plays a role in the maintenance of intestinal mucosa integrity, by providing the gut mucosa with biotin. Contributes to the luminal uptake of biotin and pantothenate into the brain across the blood-brain barrier. This is Sodium-dependent multivitamin transporter from Mus musculus (Mouse).